Reading from the N-terminus, the 442-residue chain is Elongation factor 1-alpha 1 (442 aa).

The 223-residue stretch at 5–227 folds into the tr-type G domain; that stretch reads KEHLNLVVIG…AALDSFKIPK (223 aa). The tract at residues 14-21 is G1; that stretch reads GHVDSGKS. 14-21 lines the GTP pocket; that stretch reads GHVDSGKS. Residues 70–74 form a G2 region; that stretch reads GITID. The G3 stretch occupies residues 91-94; sequence DAPG. GTP is bound by residues 91–95 and 153–156; these read DAPGH and NKMD. A G4 region spans residues 153–156; the sequence is NKMD. Residues 194 to 196 are G5; sequence SGF.

The protein belongs to the TRAFAC class translation factor GTPase superfamily. Classic translation factor GTPase family. EF-Tu/EF-1A subfamily.

It is found in the cytoplasm. In terms of biological role, this protein promotes the GTP-dependent binding of aminoacyl-tRNA to the A-site of ribosomes during protein biosynthesis. The protein is Elongation factor 1-alpha 1 (EFA1) of Euplotes crassus.